Consider the following 201-residue polypeptide: Recombination protein RecR (201 aa).

The C4-type zinc finger occupies 57–72; it reads CTHCRTFTEEESCAIC. In terms of domain architecture, Toprim spans 81–176; the sequence is GFLCVVEQPS…KVSRIAHGIP (96 aa).

The protein belongs to the RecR family.

In terms of biological role, may play a role in DNA repair. It seems to be involved in an RecBC-independent recombinational process of DNA repair. It may act with RecF and RecO. This chain is Recombination protein RecR, found in Histophilus somni (strain 129Pt) (Haemophilus somnus).